A 558-amino-acid polypeptide reads, in one-letter code: Oligo-1,6-glucosidase (558 aa).

Ca(2+) is bound by residues Asp-21, Asn-23, Asp-25, and Asp-29. Residue Asp-199 is the Nucleophile of the active site. Glu-255 serves as the catalytic Proton donor.

This sequence belongs to the glycosyl hydrolase 13 family.

It localises to the cytoplasm. It carries out the reaction Hydrolysis of (1-&gt;6)-alpha-D-glucosidic linkages in some oligosaccharides produced from starch and glycogen by alpha-amylase, and in isomaltose.. The sequence is that of Oligo-1,6-glucosidase (malL) from Bacillus cereus.